The following is a 141-amino-acid chain: Hemoglobin subunit alpha-D (141 aa).

The region spanning 1–141 (VLTAEDKKLI…VAAVLAEKYR (141 aa)) is the Globin domain. His-58 and His-87 together coordinate heme b.

The protein belongs to the globin family. In terms of assembly, heterotetramer of two alpha-D chains and two beta chains. In terms of tissue distribution, red blood cells.

Functionally, involved in oxygen transport from the lung to the various peripheral tissues. This Sturnus vulgaris (Starling) protein is Hemoglobin subunit alpha-D (HBAD).